The chain runs to 115 residues: Pro-neuregulin-4, membrane-bound isoform (115 aa).

Topologically, residues 1–62 are extracellular; the sequence is MPTDHEEPCG…SSIQTKSNLF (62 aa). Positions 5–46 constitute an EGF-like domain; that stretch reads HEEPCGPSHKSFCLNGGLCYVIPTIPSPFCRCVENYTGARCE. Cystine bridges form between C9/C23, C17/C34, and C36/C45. The N-linked (GlcNAc...) asparagine glycan is linked to N39. Residues 63–83 form a helical membrane-spanning segment; that stretch reads EAFVALAVLVTLIIGAFYFLC. Residues 84-115 are Cytoplasmic-facing; sequence RKGHFQRASSVQYDINLVETSSTSAHHSHEQH.

This sequence belongs to the neuregulin family. As to quaternary structure, interacts with ERBB4. Proteolytic cleavage close to the plasma membrane on the external face leads to the release of the soluble growth factor form. In terms of processing, extensive glycosylation precedes the proteolytic cleavage.

It is found in the cell membrane. It localises to the secreted. Its function is as follows. Low affinity ligand for the ERBB4 tyrosine kinase receptor. Concomitantly recruits ERBB1 and ERBB2 coreceptors, resulting in ligand-stimulated tyrosine phosphorylation and activation of the ERBB receptors. Does not bind to the ERBB1, ERBB2 and ERBB3 receptors. The protein is Pro-neuregulin-4, membrane-bound isoform (NRG4) of Homo sapiens (Human).